The following is a 428-amino-acid chain: Neuromedin-U receptor 1 (428 aa).

Over 1–59 the chain is Extracellular; that stretch reads MTPPCLNCSIFPGALSPNASRSPLVCNISEFKWPYQPEDLNLTDEALRLKYLGPQQMKQ. N-linked (GlcNAc...) asparagine glycosylation is found at asparagine 27 and asparagine 41. Residues 60 to 80 form a helical membrane-spanning segment; the sequence is FVPICVTYLLIFVVGTLGNGL. At 81-96 the chain is on the cytoplasmic side; the sequence is TCTVILRNKTMRTPTN. A helical membrane pass occupies residues 97 to 117; sequence FYLFSLAVSDMLVLLVGLPLE. Over 118–137 the chain is Extracellular; sequence LYEMQQNYPFQLGASACYFR. A disulfide bond links cysteine 134 and cysteine 219. A helical transmembrane segment spans residues 138–158; that stretch reads ILLLETVCLASVLNVTALSVE. At 159–181 the chain is on the cytoplasmic side; it reads RYVAVVRPLQAKSVMTRAHVRRM. A helical transmembrane segment spans residues 182–202; sequence VGAIWVLATLFSLPNTSLHGL. Topologically, residues 203–235 are extracellular; it reads SQLTVPCRGPVPDSAICSLVGPMDFYKLVVLTT. The helical transmembrane segment at 236–256 threads the bilayer; sequence ALLFFCLPMVTISVLYLLIGL. The Cytoplasmic portion of the chain corresponds to 257–294; it reads RLRRERMLLQVEVKGRKTAATQETSHRRIQLQDRGRRQ. Residues 295 to 315 traverse the membrane as a helical segment; the sequence is VTKMLFALVVVFGICWAPFHA. At 316–339 the chain is on the extracellular side; the sequence is DRIMWSLVYGHSTEGLHLAYQCVH. A helical membrane pass occupies residues 340 to 360; that stretch reads IASGIFFYLGSAANPVLYSLM. Residues 361–428 lie on the Cytoplasmic side of the membrane; that stretch reads STRFRETFLQ…PGCQQETDPS (68 aa).

Belongs to the G-protein coupled receptor 1 family. As to expression, ubiquitously expressed.

The protein resides in the cell membrane. Functionally, receptor for the neuromedin-U and neuromedin-S neuropeptides. The sequence is that of Neuromedin-U receptor 1 (Nmur1) from Mus musculus (Mouse).